Reading from the N-terminus, the 1111-residue chain is Receptor-type guanylate cyclase gcy-7 (1111 aa).

The N-terminal stretch at 1-24 (MKPFYSMSLVLFLVITLLPKPMFP) is a signal peptide. Residues 25-488 (QVATGTTGNV…CPKSFVDEYL (464 aa)) are Extracellular-facing. N-linked (GlcNAc...) asparagine glycans are attached at residues Asn-80, Asn-300, Asn-326, Asn-353, Asn-389, Asn-407, Asn-430, and Asn-441. Residues 489–509 (IWVIVAIVVLFLAITAAACGI) traverse the membrane as a helical segment. Over 510 to 1111 (YFSIQARRQE…TLKSDEQLSD (602 aa)) the chain is Cytoplasmic. The Protein kinase domain maps to 536–838 (QINSKQKGKG…NDNLMDHVFN (303 aa)). ATP is bound by residues 542-550 (KGKGEHSVR) and Lys-568. A Guanylate cyclase domain is found at 896–1026 (TIFFSDVVQF…DAVNTASRME (131 aa)).

It belongs to the adenylyl cyclase class-4/guanylyl cyclase family. Expressed asymmetrically in ASE left (ASEL) sensory neuron. Expressed in excretory canal cell.

The protein resides in the cell membrane. It catalyses the reaction GTP = 3',5'-cyclic GMP + diphosphate. In terms of biological role, guanylate cyclase involved in the production of the second messenger cGMP. Unlike other guanylate cyclases expressed in ASE neurons, may not play a role in chemotaxis responses toward salt ions in ASEL (ASE left) sensory neurons. The chain is Receptor-type guanylate cyclase gcy-7 from Caenorhabditis elegans.